We begin with the raw amino-acid sequence, 294 residues long: MEILNQRLNQQFDSWMGPRDPRVRGWLLLDNYLPTLSFTIIYLLIVWMGPKYMRNRQPVSCRGILVVYNMALTLLSLYMFYELVTAVWQGGYNFFCQDTHSGGEADNRVINVLWWYYFSKLIEFMDTFFFILRKNNHQITFLHIYHHFTMLNIWWFVMNWVPCGHSYFGATFNSFIHVLMYSYYGLSAIPAIQPYLWWKKYITQGQLVQFVLTMIQTSCAVVWPCGFPKGWLYFQISYMITLIILFSNFYIQTYKKKGTAAKKDPRHNGIKSVNGHSNGASHTNAVKNRKARTD.

7 consecutive transmembrane segments (helical) span residues Trp-26–Val-46, Ile-64–Val-84, Val-112–Leu-132, Phe-141–Val-161, Phe-172–Ile-192, Leu-207–Phe-227, and Trp-231–Ile-251. The segment at Ala-261–Asp-294 is disordered. A compositionally biased stretch (polar residues) spans Asn-274 to Val-286.

It belongs to the ELO family. ELOVL5 subfamily. Expression is highest in intestine, followed by brain and heart, and lowest in gill. Also expressed in liver, spleen and muscle.

Its subcellular location is the endoplasmic reticulum membrane. The protein resides in the cell projection. It is found in the dendrite. It carries out the reaction a very-long-chain acyl-CoA + malonyl-CoA + H(+) = a very-long-chain 3-oxoacyl-CoA + CO2 + CoA. It catalyses the reaction (6Z,9Z,12Z)-octadecatrienoyl-CoA + malonyl-CoA + H(+) = (8Z,11Z,14Z)-3-oxoeicosatrienoyl-CoA + CO2 + CoA. The catalysed reaction is (9Z,12Z,15Z)-octadecatrienoyl-CoA + malonyl-CoA + H(+) = (11Z,14Z,17Z)-3-oxoeicosatrienoyl-CoA + CO2 + CoA. The enzyme catalyses (9Z)-hexadecenoyl-CoA + malonyl-CoA + H(+) = 3-oxo-(11Z)-octadecenoyl-CoA + CO2 + CoA. It carries out the reaction (9Z)-octadecenoyl-CoA + malonyl-CoA + H(+) = 3-oxo-(11Z)-eicosenoyl-CoA + CO2 + CoA. It catalyses the reaction (11Z)-octadecenoyl-CoA + malonyl-CoA + H(+) = 3-oxo-(13Z)-eicosenoyl-CoA + CO2 + CoA. The catalysed reaction is (9Z,12Z)-octadecadienoyl-CoA + malonyl-CoA + H(+) = (11Z,14Z)-3-oxoicosa-11,14-dienoyl-CoA + CO2 + CoA. The enzyme catalyses (6Z,9Z,12Z,15Z)-octadecatetraenoyl-CoA + malonyl-CoA + H(+) = (8Z,11Z,14Z,17Z)-3-oxoicosatetraenoyl-CoA + CO2 + CoA. It carries out the reaction (5Z,8Z,11Z,14Z)-eicosatetraenoyl-CoA + malonyl-CoA + H(+) = (7Z,10Z,13Z,16Z)-3-oxodocosatetraenoyl-CoA + CO2 + CoA. It catalyses the reaction (5Z,8Z,11Z,14Z,17Z)-eicosapentaenoyl-CoA + malonyl-CoA + H(+) = 3-oxo-(7Z,10Z,13Z,16Z,19Z)-docosapentaenoyl-CoA + CO2 + CoA. It functions in the pathway lipid metabolism; polyunsaturated fatty acid biosynthesis. Catalyzes the first and rate-limiting reaction of the four reactions that constitute the long-chain fatty acids elongation cycle. This endoplasmic reticulum-bound enzymatic process allows the addition of 2 carbons to the chain of long- and very long-chain fatty acids (VLCFAs) per cycle. Condensing enzyme that acts specifically toward polyunsaturated acyl-CoA with the higher activity toward C18:3(n-6) acyl-CoA. May participate in the production of monounsaturated and of polyunsaturated VLCFAs of different chain lengths that are involved in multiple biological processes as precursors of membrane lipids and lipid mediators. In conditions where the essential linoleic and alpha linoleic fatty acids are lacking it is also involved in the synthesis of Mead acid from oleic acid. This Tachysurus fulvidraco (Yellow catfish) protein is Very long chain fatty acid elongase 5.